The chain runs to 225 residues: Ribose-5-phosphate isomerase A (225 aa).

Substrate-binding positions include 26–29 (TGST), 82–85 (DGAD), and 95–98 (KGGG). Residue glutamate 104 is the Proton acceptor of the active site. Lysine 122 contributes to the substrate binding site.

The protein belongs to the ribose 5-phosphate isomerase family. In terms of assembly, homodimer.

It carries out the reaction aldehydo-D-ribose 5-phosphate = D-ribulose 5-phosphate. It functions in the pathway carbohydrate degradation; pentose phosphate pathway; D-ribose 5-phosphate from D-ribulose 5-phosphate (non-oxidative stage): step 1/1. In terms of biological role, catalyzes the reversible conversion of ribose-5-phosphate to ribulose 5-phosphate. The sequence is that of Ribose-5-phosphate isomerase A from Streptococcus mutans serotype c (strain ATCC 700610 / UA159).